The sequence spans 1385 residues: Defecation cycle abnormal dec-7 (1385 aa).

A signal peptide spans 1–19 (MWTARHAVALLVVLTYAYS). N-linked (GlcNAc...) asparagine glycosylation is present at N156. The disordered stretch occupies residues 234 to 262 (SQTNYGAPNYQQAGAQSAANQQFSNPSQY). The segment covering 242 to 261 (NYQQAGAQSAANQQFSNPSQ) has biased composition (low complexity). In terms of domain architecture, NIDO spans 285–450 (QIYGKRKKRQ…GRWIHRVDEV (166 aa)). N-linked (GlcNAc...) asparagine glycosylation is found at N313, N386, N413, N458, N480, N562, and N583. The 160-residue stretch at 681 to 840 (GRNWPIDMCI…DHCEFYYWRR (160 aa)) folds into the AMOP domain. The VWFD domain maps to 852–1088 (AAGYIYGEPH…FWKIDGTNDK (237 aa)). 5 N-linked (GlcNAc...) asparagine glycosylation sites follow: N909, N921, N975, N1009, and N1124. In terms of domain architecture, Sushi spans 1179–1238 (ISCGPLLKKEGVVKTPPAANYLDGDKVVFSCKPKYYIHGDIERVCRNGTWSPGWWAWCRD). 2 disulfides stabilise this stretch: C1181/C1223 and C1209/C1236. An N-linked (GlcNAc...) asparagine glycan is attached at N1225. A helical membrane pass occupies residues 1251–1271 (LLSIFGISLIFVIFFCILWNI). The disordered stretch occupies residues 1321–1385 (MNQPSRPIPS…GNMRFETSAI (65 aa)).

In terms of tissue distribution, highly expressed in the intestinal epithelia.

Its subcellular location is the membrane. The protein resides in the cell junction. Its function is as follows. May negatively regulate activity of innexin gap junction protein inx-16, thereby mediating the rhythmic frequency of the defecation motor program. Required for the clustering of inx-16 to the cell-cell junction of the intestinal epithelia. Probably dispensable for intestinal integrity. May be a cytokine receptor. The polypeptide is Defecation cycle abnormal dec-7 (Caenorhabditis elegans).